A 241-amino-acid chain; its full sequence is UDP-2,3-diacylglucosamine hydrolase (241 aa).

Mn(2+)-binding residues include Asp8, His10, Asp41, Asn79, and His114. 79–80 (NR) lines the substrate pocket. Asp122, Ser160, Asn164, Lys167, and His195 together coordinate substrate. His195 and His197 together coordinate Mn(2+).

Belongs to the LpxH family. Requires Mn(2+) as cofactor.

The protein localises to the cell inner membrane. It catalyses the reaction UDP-2-N,3-O-bis[(3R)-3-hydroxytetradecanoyl]-alpha-D-glucosamine + H2O = 2-N,3-O-bis[(3R)-3-hydroxytetradecanoyl]-alpha-D-glucosaminyl 1-phosphate + UMP + 2 H(+). Its pathway is glycolipid biosynthesis; lipid IV(A) biosynthesis; lipid IV(A) from (3R)-3-hydroxytetradecanoyl-[acyl-carrier-protein] and UDP-N-acetyl-alpha-D-glucosamine: step 4/6. In terms of biological role, hydrolyzes the pyrophosphate bond of UDP-2,3-diacylglucosamine to yield 2,3-diacylglucosamine 1-phosphate (lipid X) and UMP by catalyzing the attack of water at the alpha-P atom. Involved in the biosynthesis of lipid A, a phosphorylated glycolipid that anchors the lipopolysaccharide to the outer membrane of the cell. The sequence is that of UDP-2,3-diacylglucosamine hydrolase from Aeromonas hydrophila subsp. hydrophila (strain ATCC 7966 / DSM 30187 / BCRC 13018 / CCUG 14551 / JCM 1027 / KCTC 2358 / NCIMB 9240 / NCTC 8049).